Consider the following 390-residue polypeptide: Protein MalY (390 aa).

Residue Lys233 is modified to N6-(pyridoxal phosphate)lysine.

Belongs to the class-II pyridoxal-phosphate-dependent aminotransferase family. MalY/PatB cystathionine beta-lyase subfamily. In terms of assembly, homodimer. Interacts with MalT. Requires pyridoxal 5'-phosphate as cofactor.

It carries out the reaction L,L-cystathionine + H2O = L-homocysteine + pyruvate + NH4(+). It catalyses the reaction an S-substituted L-cysteine + H2O = a thiol + pyruvate + NH4(+). In terms of biological role, acts as a beta-cystathionase and as a repressor of the maltose regulon. This Escherichia coli (strain K12) protein is Protein MalY (malY).